Reading from the N-terminus, the 236-residue chain is UPF0502 protein BamMC406_5439 (236 aa).

The protein belongs to the UPF0502 family.

This is UPF0502 protein BamMC406_5439 from Burkholderia ambifaria (strain MC40-6).